The following is a 155-amino-acid chain: Small ribosomal subunit protein uS7 (155 aa).

The protein belongs to the universal ribosomal protein uS7 family. Part of the 30S ribosomal subunit. Contacts proteins S9 and S11.

Functionally, one of the primary rRNA binding proteins, it binds directly to 16S rRNA where it nucleates assembly of the head domain of the 30S subunit. Is located at the subunit interface close to the decoding center, probably blocks exit of the E-site tRNA. This is Small ribosomal subunit protein uS7 from Fervidobacterium nodosum (strain ATCC 35602 / DSM 5306 / Rt17-B1).